The primary structure comprises 333 residues: MKKSTKLLAGIVTLASAMTLAACQSTNDNTSVITMKGDTISVSDFYNETKNTEISQRAMLNLVVSRVFEDQYGKKVSKKKTEEAYNKSAEQYGASFSAALAQSGLTTDTYKRQIRSAMLVEYAVKEAAKKELTDADYKKAYESYTPEMTTQVITLDNEETAKAILGEVKAEGADFAAIAKEKTTAADKKVDYKFDSGDTKLPADVIKAASGLKEGDISEVVSVLDPATYQNKFYIVKVTKKAEKASDWKKYKKRLKEIVLAEKTQNIDFQNKVIAKALDKANVKIKDQAFANILAQYANTDKKASKANTSKSDQKTSSDSSKDSQSSKSKSEK.

The first 22 residues, 1-22, serve as a signal peptide directing secretion; that stretch reads MKKSTKLLAGIVTLASAMTLAA. C23 carries N-palmitoyl cysteine lipidation. The S-diacylglycerol cysteine moiety is linked to residue C23. Residues 145–240 enclose the PpiC domain; that stretch reads TPEMTTQVIT…NKFYIVKVTK (96 aa). The tract at residues 301-333 is disordered; that stretch reads DKKASKANTSKSDQKTSSDSSKDSQSSKSKSEK. Over residues 312–322 the composition is skewed to basic and acidic residues; the sequence is SDQKTSSDSSK. Residues 323–333 are compositionally biased toward low complexity; sequence DSQSSKSKSEK.

Belongs to the PrsA family.

The protein localises to the cell membrane. The enzyme catalyses [protein]-peptidylproline (omega=180) = [protein]-peptidylproline (omega=0). Its function is as follows. Plays a major role in protein secretion by helping the post-translocational extracellular folding of several secreted proteins. The polypeptide is Foldase protein PrsA (Streptococcus equi subsp. zooepidemicus (strain MGCS10565)).